Here is a 118-residue protein sequence, read N- to C-terminus: D-dopachrome decarboxylase (118 aa).

Proline 2 carries the N-acetylproline modification.

This sequence belongs to the MIF family. As to quaternary structure, homotrimer.

The protein localises to the cytoplasm. The enzyme catalyses D-dopachrome + H(+) = 5,6-dihydroxyindole + CO2. Tautomerization of D-dopachrome with decarboxylation to give 5,6-dihydroxyindole (DHI). This is D-dopachrome decarboxylase (ddt) from Xenopus tropicalis (Western clawed frog).